We begin with the raw amino-acid sequence, 163 residues long: Nucleotide-binding protein EAT1b_2037 (163 aa).

It belongs to the YajQ family.

In terms of biological role, nucleotide-binding protein. In Exiguobacterium sp. (strain ATCC BAA-1283 / AT1b), this protein is Nucleotide-binding protein EAT1b_2037.